The chain runs to 894 residues: Mitogen-activated protein kinase kinase kinase kinase 3 (894 aa).

Met1 is modified (N-acetylmethionine). A Protein kinase domain is found at 16–273 (FELIQRIGSG…AEKLLQHPFV (258 aa)). Residues 22-30 (IGSGTYGDV) and Lys45 contribute to the ATP site. The Proton acceptor role is filled by Asp136. At Ser329 the chain carries Phosphoserine. The disordered stretch occupies residues 339–358 (DPPLRKETEPHHELPDSDGF). A compositionally biased stretch (basic and acidic residues) spans 340–353 (PPLRKETEPHHELP). Ser398 is modified (phosphoserine). Positions 408 to 537 (HVAHLEDDEG…VPKPISNGLP (130 aa)) are disordered. Residues 473 to 487 (HVPPRPPPPRLPPQK) are compositionally biased toward pro residues. The segment covering 508–520 (LYQQQSEQRGTNL) has biased composition (polar residues). Residues 556–867 (PLKIHCATSW…IFRLLGSDRV (312 aa)) enclose the CNH domain.

The protein belongs to the protein kinase superfamily. STE Ser/Thr protein kinase family. STE20 subfamily. Interacts with SH3GL2. Interaction appears to regulate MAP4K3-mediated JNK activation. It depends on Mg(2+) as a cofactor.

The catalysed reaction is L-seryl-[protein] + ATP = O-phospho-L-seryl-[protein] + ADP + H(+). The enzyme catalyses L-threonyl-[protein] + ATP = O-phospho-L-threonyl-[protein] + ADP + H(+). In terms of biological role, serine/threonine kinase that plays a role in the response to environmental stress. Appears to act upstream of the JUN N-terminal pathway. Activator of the Hippo signaling pathway which plays a pivotal role in organ size control and tumor suppression by restricting proliferation and promoting apoptosis. MAP4Ks act in parallel to and are partially redundant with STK3/MST2 and STK4/MST2 in the phosphorylation and activation of LATS1/2, and establish MAP4Ks as components of the expanded Hippo pathway. This Mus musculus (Mouse) protein is Mitogen-activated protein kinase kinase kinase kinase 3 (Map4k3).